The chain runs to 376 residues: MASSEQAEQPNQPSSPPGSENVVPREPLIATAVKFLQNSRVRQSPLATRRAFLKKKGLTDEEIDLAFQQSGTAADEPSPLGPATPVVPVQPPHLTPQPYSPRGSRWRDYGALAIIMAGIAFGFHQLYKRYLLPLILGGREDRKQLERMAASLSELSGTVAQTVTQVQTTLASVQELLRQQQQKVQELAHELATAKATTSTNWILESQNINELKSEINSLKGLLLNRRQFPPSPSAPKIPSWQIPVKSSSPSSPAAVNHHSSSDISPVSNESTSSSPGKDSHSPEGSTATYHLLGPQEEGEGVLDVKGQVRMEVQGEEEKREDKEDEDDEDDDVSHVDEEDVLGVQREDRRGGDGQINEQVEKLRRPEGASNETERD.

Polar residues predominate over residues 1–12 (MASSEQAEQPNQ). The segment at 1-24 (MASSEQAEQPNQPSSPPGSENVVP) is disordered. Ala-2 bears the N-acetylalanine mark. Residues 2-108 (ASSEQAEQPN…YSPRGSRWRD (107 aa)) lie on the Peroxisomal side of the membrane. N6-acetyllysine is present on Lys-34. The tract at residues 70-102 (SGTAADEPSPLGPATPVVPVQPPHLTPQPYSPR) is disordered. Residues 88–99 (PVQPPHLTPQPY) are compositionally biased toward pro residues. A helical membrane pass occupies residues 109–127 (YGALAIIMAGIAFGFHQLY). Topologically, residues 128 to 376 (KRYLLPLILG…EGASNETERD (249 aa)) are cytoplasmic. Positions 230–376 (PPSPSAPKIP…EGASNETERD (147 aa)) are disordered. Ser-232 carries the phosphoserine modification. Composition is skewed to low complexity over residues 247 to 259 (SSSP…VNHH) and 265 to 275 (SPVSNESTSSS). A phosphoserine mark is found at Ser-282 and Ser-334. The span at 323–341 (KEDEDDEDDDVSHVDEEDV) shows a compositional bias: acidic residues. Residues 359–376 (QVEKLRRPEGASNETERD) are compositionally biased toward basic and acidic residues.

Belongs to the peroxin-14 family. As to quaternary structure, interacts with PEX13; forming the PEX13-PEX14 docking complex. Interacts with PEX5 (via WxxxF/Y motifs). Interacts with PEX19. Interacts with tubulin.

It localises to the peroxisome membrane. Component of the PEX13-PEX14 docking complex, a translocon channel that specifically mediates the import of peroxisomal cargo proteins bound to PEX5 receptor. The PEX13-PEX14 docking complex forms a large import pore which can be opened to a diameter of about 9 nm. Mechanistically, PEX5 receptor along with cargo proteins associates with the PEX14 subunit of the PEX13-PEX14 docking complex in the cytosol, leading to the insertion of the receptor into the organelle membrane with the concomitant translocation of the cargo into the peroxisome matrix. Plays a key role for peroxisome movement through a direct interaction with tubulin. The chain is Peroxisomal membrane protein PEX14 from Mus musculus (Mouse).